Consider the following 775-residue polypeptide: Mitosis inducer protein kinase cdr2 (775 aa).

The Protein kinase domain maps to 10–262; it reads WELGLSLGSG…MEQIREHPFL (253 aa). Residues 16–24 and Lys-39 contribute to the ATP site; that span reads LGSGGPNSS. The active-site Proton acceptor is Asp-133. Phosphoserine is present on residues Ser-309, Ser-311, and Ser-476. Residues 549 to 563 show a composition bias toward low complexity; it reads NNIDNNNYNQPYANA. Residues 549–620 form a disordered region; sequence NNIDNNNYNQ…TKKKLSGSPF (72 aa). A compositionally biased stretch (polar residues) spans 584 to 593; sequence LSQSPASYDS. A phosphoserine mark is found at Ser-587 and Ser-632.

This sequence belongs to the protein kinase superfamily. CAMK Ser/Thr protein kinase family. NIM1 subfamily. As to quaternary structure, interacts with blt1 and mid1. Post-translationally, autophosphorylated.

It carries out the reaction L-seryl-[protein] + ATP = O-phospho-L-seryl-[protein] + ADP + H(+). It catalyses the reaction L-threonyl-[protein] + ATP = O-phospho-L-threonyl-[protein] + ADP + H(+). Functionally, acts as a mitotic inducer. In G2 it negatively regulates wee1, a mitotic inhibitor. Also has a role in cytokinesis where it required for proper septum formation. The polypeptide is Mitosis inducer protein kinase cdr2 (cdr2) (Schizosaccharomyces pombe (strain 972 / ATCC 24843) (Fission yeast)).